Here is an 881-residue protein sequence, read N- to C-terminus: DNA mismatch repair protein MutS (881 aa).

632–639 (GPNMGGKS) provides a ligand contact to ATP.

This sequence belongs to the DNA mismatch repair MutS family.

This protein is involved in the repair of mismatches in DNA. It is possible that it carries out the mismatch recognition step. This protein has a weak ATPase activity. The chain is DNA mismatch repair protein MutS from Acinetobacter baylyi (strain ATCC 33305 / BD413 / ADP1).